A 686-amino-acid chain; its full sequence is DNA ligase 1 (686 aa).

NAD(+)-binding positions include aspartate 35 to aspartate 39, serine 84 to leucine 85, and glutamate 119. Lysine 121 serves as the catalytic N6-AMP-lysine intermediate. 4 residues coordinate NAD(+): arginine 142, glutamate 177, lysine 293, and lysine 317. Zn(2+)-binding residues include cysteine 411, cysteine 414, cysteine 429, and cysteine 434. Positions arginine 602–proline 686 constitute a BRCT domain.

Belongs to the NAD-dependent DNA ligase family. LigA subfamily. Mg(2+) is required as a cofactor. Mn(2+) serves as cofactor.

It catalyses the reaction NAD(+) + (deoxyribonucleotide)n-3'-hydroxyl + 5'-phospho-(deoxyribonucleotide)m = (deoxyribonucleotide)n+m + AMP + beta-nicotinamide D-nucleotide.. In terms of biological role, DNA ligase that catalyzes the formation of phosphodiester linkages between 5'-phosphoryl and 3'-hydroxyl groups in double-stranded DNA using NAD as a coenzyme and as the energy source for the reaction. It is essential for DNA replication and repair of damaged DNA. The polypeptide is DNA ligase 1 (Deinococcus deserti (strain DSM 17065 / CIP 109153 / LMG 22923 / VCD115)).